We begin with the raw amino-acid sequence, 40 residues long: Ice-structuring protein GS-8 (40 aa).

Position 1 is a blocked amino end (Met) (M1).

Belongs to the type-I AFP family.

Antifreeze proteins lower the blood freezing point. This chain is Ice-structuring protein GS-8, found in Myoxocephalus aenaeus (Grubby sculpin).